We begin with the raw amino-acid sequence, 149 residues long: Putative oligosaccharyltransferase complex subunit CG9662 (149 aa).

Residues 1 to 32 (MIETLYNLPFHILVPPNIKVRRFSIPMPSPMA) lie on the Cytoplasmic side of the membrane. A helical membrane pass occupies residues 33–53 (VFSVILFSYFLVTGGIIYDVI). Over 54–83 (VEPPSLGATVDEHGHSRPVAFMPYRVNGQY) the chain is Extracellular. A helical membrane pass occupies residues 84–104 (IMEGLASSFLFTVGGLGFIIM). Residues 105–117 (DQTHTPGKTNLNR) lie on the Cytoplasmic side of the membrane. Residues 118–138 (LLLTAMGFIFILVSFFTTWLF) traverse the membrane as a helical segment. Residues 139-149 (MRMKLPSYLQP) lie on the Extracellular side of the membrane.

This sequence belongs to the OSTC family. Component of the oligosaccharyltransferase (OST) complex.

The protein resides in the membrane. Its function is as follows. Subunit of the oligosaccharyl transferase (OST) complex that catalyzes the initial transfer of a defined glycan (Glc(3)Man(9)GlcNAc(2) in eukaryotes) from the lipid carrier dolichol-pyrophosphate to an asparagine residue within an Asn-X-Ser/Thr consensus motif in nascent polypeptide chains, the first step in protein N-glycosylation. N-glycosylation occurs cotranslationally and the complex associates with the Sec61 complex at the channel-forming translocon complex that mediates protein translocation across the endoplasmic reticulum (ER). All subunits are required for a maximal enzyme activity. This Drosophila melanogaster (Fruit fly) protein is Putative oligosaccharyltransferase complex subunit CG9662.